An 87-amino-acid polypeptide reads, in one-letter code: U14-lycotoxin-Ls1b (87 aa).

A signal peptide spans Met1–Ser20. Residues Glu21–Ser66 enclose the WAP domain. Disulfide bonds link Cys24/Cys54, Cys32/Cys58, Cys41/Cys53, Cys42/Cys80, and Cys47/Cys62.

This sequence belongs to the venom protein 11 family. 01 (wap-1) subfamily. In terms of processing, contains 5 disulfide bonds. Expressed by the venom gland.

Its subcellular location is the secreted. Functionally, has antibacterial activity. This chain is U14-lycotoxin-Ls1b, found in Lycosa singoriensis (Wolf spider).